We begin with the raw amino-acid sequence, 717 residues long: DNA ligase (717 aa).

NAD(+) contacts are provided by residues 44–48 (DADYD), 93–94 (SL), and E127. Catalysis depends on K129, which acts as the N6-AMP-lysine intermediate. Residues R150, E186, K302, and K326 each coordinate NAD(+). Zn(2+)-binding residues include C431, C434, C455, and C461. Positions 639-717 (STDSPVAGKT…EDEWLALIGG (79 aa)) constitute a BRCT domain.

This sequence belongs to the NAD-dependent DNA ligase family. LigA subfamily. Requires Mg(2+) as cofactor. The cofactor is Mn(2+).

It carries out the reaction NAD(+) + (deoxyribonucleotide)n-3'-hydroxyl + 5'-phospho-(deoxyribonucleotide)m = (deoxyribonucleotide)n+m + AMP + beta-nicotinamide D-nucleotide.. DNA ligase that catalyzes the formation of phosphodiester linkages between 5'-phosphoryl and 3'-hydroxyl groups in double-stranded DNA using NAD as a coenzyme and as the energy source for the reaction. It is essential for DNA replication and repair of damaged DNA. In Sinorhizobium fredii (strain NBRC 101917 / NGR234), this protein is DNA ligase.